A 346-amino-acid chain; its full sequence is uncharacterized protein (346 aa).

An N-terminal signal peptide occupies residues 1-28 (MFEWMKNKKAISPILALLIVLGVTIVVG).

This is an uncharacterized protein from Methanocaldococcus jannaschii (strain ATCC 43067 / DSM 2661 / JAL-1 / JCM 10045 / NBRC 100440) (Methanococcus jannaschii).